The chain runs to 195 residues: L-rhamnose-binding lectin CSL3 (195 aa).

SUEL-type lectin domains are found at residues 1 to 95 and 105 to 195; these read AISI…YSCV and ICEG…YTCD.

Functionally, L-rhamnose binding lectin. Has hemagglutinating activity towards rabbit erythrocytes, human type A erythrocytes, human type B erythrocytes, human type O erythrocytes and sheep erythrocytes. Hemagglutinating activity is inhibited by smooth-type lipopolysaccharide (LPS) from S.flexneri 1A, A.salmonicida and E.coli K12, but not by rough-type LPS from S.flexneri, E.coli K12 and E.coli EH100. Agglutinates E.coli K12 and B.subtilis. This is L-rhamnose-binding lectin CSL3 from Oncorhynchus keta (Chum salmon).